The sequence spans 323 residues: tRNA dimethylallyltransferase (323 aa).

12-19 is a binding site for ATP; sequence GPTAAGKT. 14-19 is a substrate binding site; sequence TAAGKT. Interaction with substrate tRNA stretches follow at residues 37–40 and 161–165; these read DSAL and QRLMR.

This sequence belongs to the IPP transferase family. In terms of assembly, monomer. The cofactor is Mg(2+).

The catalysed reaction is adenosine(37) in tRNA + dimethylallyl diphosphate = N(6)-dimethylallyladenosine(37) in tRNA + diphosphate. Functionally, catalyzes the transfer of a dimethylallyl group onto the adenine at position 37 in tRNAs that read codons beginning with uridine, leading to the formation of N6-(dimethylallyl)adenosine (i(6)A). This Pseudomonas aeruginosa (strain UCBPP-PA14) protein is tRNA dimethylallyltransferase.